A 214-amino-acid polypeptide reads, in one-letter code: Melanoregulin (214 aa).

The Cholesterol-binding sequence motif signature appears at 162-172; the sequence is LSERYLLVVDR. Serine 213 carries the post-translational modification Phosphoserine.

It belongs to the melanoregulin family. As to quaternary structure, identified in a complex with RILP and DCTN1; interacts directly with RILP, but does not interact directly with DCTN1. Interacts with PRPH2. In terms of processing, palmitoylated. Palmitoylation is required to maintain the protein at the melanosome membrane. As to expression, detected in melanocytes. Expressed in retina, in retinal pigment epithelium (at protein level). Widely expressed with higher expression in skin, heart, liver, testis and thymus. Detected in retina, in retinal pigment epithelium cells.

Its subcellular location is the apical cell membrane. It is found in the melanosome membrane. The protein resides in the lysosome membrane. It localises to the cytoplasmic vesicle membrane. In terms of biological role, probably functions as a cargo-recognition protein that couples cytoplasmic vesicles to the transport machinery. Plays a role in hair pigmentation, a process that involves shedding of melanosome-containing vesicles from melanocytes, followed by phagocytosis of the melanosome-containing vesicles by keratinocytes. Functions on melanosomes as receptor for RILP and the complex formed by RILP and DCTN1, and thereby contributes to retrograde melanosome transport from the cell periphery to the center. Overexpression causes accumulation of late endosomes and/or lysosomes at the microtubule organising center (MTOC) at the center of the cell. Probably binds cholesterol and requires the presence of cholesterol in membranes to function in microtubule-mediated retrograde organelle transport. Binds phosphatidylinositol 3-phosphate, phosphatidylinositol 4-phosphate, phosphatidylinositol 5-phosphate and phosphatidylinositol 3,5-bisphosphate, but not phosphatidylinositol 3,4-bisphosphate or phosphatidylinositol 4,5-bisphosphate. Required for normal phagosome clearing and normal activation of lysosomal enzymes in lysosomes from retinal pigment epithelium cells. Required for normal degradation of the lipofuscin component N-retinylidene-N-retinylethanolamine (A2E) in the eye. May function in membrane fusion and regulate the biogenesis of disk membranes of photoreceptor rod cells. The chain is Melanoregulin (Mreg) from Mus musculus (Mouse).